We begin with the raw amino-acid sequence, 337 residues long: DNA-directed RNA polymerase subunit alpha (337 aa).

Residues 1 to 233 are alpha N-terminal domain (alpha-NTD); that stretch reads MVREKVTVST…DLFIPFLHAQ (233 aa). An alpha C-terminal domain (alpha-CTD) region spans residues 267-337; the sequence is IALKYIFIDQ…FTVDLPKNKF (71 aa).

This sequence belongs to the RNA polymerase alpha chain family. As to quaternary structure, in plastids the minimal PEP RNA polymerase catalytic core is composed of four subunits: alpha, beta, beta', and beta''. When a (nuclear-encoded) sigma factor is associated with the core the holoenzyme is formed, which can initiate transcription.

The protein resides in the plastid. It localises to the chloroplast. It carries out the reaction RNA(n) + a ribonucleoside 5'-triphosphate = RNA(n+1) + diphosphate. Its function is as follows. DNA-dependent RNA polymerase catalyzes the transcription of DNA into RNA using the four ribonucleoside triphosphates as substrates. The chain is DNA-directed RNA polymerase subunit alpha from Platanus occidentalis (Sycamore).